A 244-amino-acid polypeptide reads, in one-letter code: 5-oxoprolinase subunit A (244 aa).

It belongs to the LamB/PxpA family. Forms a complex composed of PxpA, PxpB and PxpC.

The enzyme catalyses 5-oxo-L-proline + ATP + 2 H2O = L-glutamate + ADP + phosphate + H(+). Catalyzes the cleavage of 5-oxoproline to form L-glutamate coupled to the hydrolysis of ATP to ADP and inorganic phosphate. This chain is 5-oxoprolinase subunit A, found in Shigella boydii serotype 18 (strain CDC 3083-94 / BS512).